A 448-amino-acid polypeptide reads, in one-letter code: Arginine synthetase ArcE (448 aa).

As to quaternary structure, probably forms homotetramers and higher assemblies of tetramers. Mg(2+) is required as a cofactor.

It carries out the reaction L-arginine + ADP + phosphate + H(+) = L-citrulline + NH4(+) + ATP. It participates in amino-acid biosynthesis; L-proline biosynthesis. The protein operates within amino-acid degradation; L-arginine degradation. Its pathway is amino-acid biosynthesis; L-arginine biosynthesis. Functionally, arginine deiminase involved in an arginine synthetase pathway, which provides citrulline and ornithine, the precursors for proline biosynthesis. Catalyzes the conversion of L-arginine to citrulline while conserving the energy of arginine deimination to generate ATP from ADP and free phosphate. Is specific toward L-arginine and cannot use D-arginine, agmatine, guanidine, L-alanine-L-arginine dipeptide and L-arginine-L-alanine dipeptide. Can also use CDP, GDP or UDP, with lower activity (38%, 8.4% and 13.3%, respectively). The enzyme can also catalyze the reverse reaction: the ATP-dependent generation of arginine from citrulline in a single reaction by using free ammonia, without the requirement of aspartic acid. In vivo, most likely functions in the arginine catabolism to produce citrulline for proline biosynthesis while also generating ATP, but it can also contribute to arginine biosynthesis when the necessary precursors such as citrulline are abundant. This is Arginine synthetase ArcE from Thermococcus kodakarensis (strain ATCC BAA-918 / JCM 12380 / KOD1) (Pyrococcus kodakaraensis (strain KOD1)).